Consider the following 221-residue polypeptide: Vesicle-associated membrane protein 714 (221 aa).

Ala-2 carries the post-translational modification N-acetylalanine. Residues 2-190 are Cytoplasmic-facing; it reads AIVYAVVARG…RRALWMKNAK (189 aa). The region spanning 7-112 is the Longin domain; it reads VVARGTVVLA…AMNDEFSRVL (106 aa). The 61-residue stretch at 127-187 folds into the v-SNARE coiled-coil homology domain; it reads TLNRVRGEVS…KRLRRALWMK (61 aa). The helical; Anchor for type IV membrane protein transmembrane segment at 191-211 threads the bilayer; it reads LLVLLTCLIVFLLYIIIASFC. Residues 212–221 lie on the Vesicular side of the membrane; the sequence is GGITLPSCRS.

This sequence belongs to the synaptobrevin family. In terms of tissue distribution, highly expressed in leaves, stems and roots. Detected in flowers.

The protein resides in the golgi apparatus membrane. Functionally, involved in the targeting and/or fusion of transport vesicles to their target membrane. The chain is Vesicle-associated membrane protein 714 from Arabidopsis thaliana (Mouse-ear cress).